Reading from the N-terminus, the 72-residue chain is Translation initiation factor IF-1 (72 aa).

The region spanning 1–72 (MAKEEPIEVE…TRGRIIYRTK (72 aa)) is the S1-like domain.

This sequence belongs to the IF-1 family. Component of the 30S ribosomal translation pre-initiation complex which assembles on the 30S ribosome in the order IF-2 and IF-3, IF-1 and N-formylmethionyl-tRNA(fMet); mRNA recruitment can occur at any time during PIC assembly.

The protein localises to the cytoplasm. Functionally, one of the essential components for the initiation of protein synthesis. Stabilizes the binding of IF-2 and IF-3 on the 30S subunit to which N-formylmethionyl-tRNA(fMet) subsequently binds. Helps modulate mRNA selection, yielding the 30S pre-initiation complex (PIC). Upon addition of the 50S ribosomal subunit IF-1, IF-2 and IF-3 are released leaving the mature 70S translation initiation complex. The sequence is that of Translation initiation factor IF-1 from Syntrophus aciditrophicus (strain SB).